The sequence spans 195 residues: dCTP deaminase (195 aa).

DCTP-binding positions include 109 to 114, Asp127, 135 to 137, Tyr170, Lys177, and Gln181; these read RSSLAR and TLE. The active-site Proton donor/acceptor is Glu137.

Belongs to the dCTP deaminase family. Homotrimer.

The enzyme catalyses dCTP + H2O + H(+) = dUTP + NH4(+). The protein operates within pyrimidine metabolism; dUMP biosynthesis; dUMP from dCTP (dUTP route): step 1/2. In terms of biological role, catalyzes the deamination of dCTP to dUTP. This Rhodospirillum rubrum (strain ATCC 11170 / ATH 1.1.1 / DSM 467 / LMG 4362 / NCIMB 8255 / S1) protein is dCTP deaminase.